Consider the following 391-residue polypeptide: Glycosyltransferase afumC (391 aa).

Belongs to the afumC glycosyltransferase family.

Its pathway is secondary metabolite biosynthesis. Its activity is regulated as follows. Activity is significantly decreased by addition of divalent cations such as Mg(2+), Mn(2+), Zn(2+), Ca(2+), Co(2+), Cu(2+), and Ni(2+); while Fe(2+) has little effect. Its function is as follows. Glycosyltransferase; part of the gene cluster that mediates the biosynthesis fumihopaside A, a hopane-type glucoside that enhances the thermotolerance and UV resistance of N.fumigata. The first step of fumihopaside A biosynthesis is performed by the squalene hopane cyclase afumA that catalyzes the cyclization of 3S-oxidosqualene into the hopene 21-beta-H-hopane-3-beta,22-diol. The cytochrome P450 monooxygenase afumB is responsible for both hydroxylation at C-24 and oxidations at C-30 of the afumA product. The glycosyltransferase afumC then catalyzes the glycosylation at C-24, using UDP-D-glucose as a donor, to produce fumihopaside A. AfumC is also able to accept UDP-D-galactose and UDP-D-glucuronic acid as donors to yield minor derivatives. Fumihopaside B, another minor derivative produced, is different from fumihopaside A due to the presence of a double bond between C-22 and C-29. This chain is Glycosyltransferase afumC, found in Aspergillus fumigatus (strain CBS 144.89 / FGSC A1163 / CEA10) (Neosartorya fumigata).